Reading from the N-terminus, the 272-residue chain is Dermonecrotic toxin SpeSicTox-betaIB2b (272 aa).

The active site involves histidine 5. Positions 25 and 27 each coordinate Mg(2+). Histidine 41 serves as the catalytic Nucleophile. 2 disulfides stabilise this stretch: cysteine 45/cysteine 51 and cysteine 47/cysteine 191. Aspartate 85 lines the Mg(2+) pocket.

This sequence belongs to the arthropod phospholipase D family. Class II subfamily. Requires Mg(2+) as cofactor. Expressed by the venom gland.

Its subcellular location is the secreted. The enzyme catalyses an N-(acyl)-sphingosylphosphocholine = an N-(acyl)-sphingosyl-1,3-cyclic phosphate + choline. It catalyses the reaction an N-(acyl)-sphingosylphosphoethanolamine = an N-(acyl)-sphingosyl-1,3-cyclic phosphate + ethanolamine. It carries out the reaction a 1-acyl-sn-glycero-3-phosphocholine = a 1-acyl-sn-glycero-2,3-cyclic phosphate + choline. The catalysed reaction is a 1-acyl-sn-glycero-3-phosphoethanolamine = a 1-acyl-sn-glycero-2,3-cyclic phosphate + ethanolamine. In terms of biological role, dermonecrotic toxins cleave the phosphodiester linkage between the phosphate and headgroup of certain phospholipids (sphingolipid and lysolipid substrates), forming an alcohol (often choline) and a cyclic phosphate. This toxin acts on sphingomyelin (SM). It may also act on ceramide phosphoethanolamine (CPE), lysophosphatidylcholine (LPC) and lysophosphatidylethanolamine (LPE), but not on lysophosphatidylserine (LPS), and lysophosphatidylglycerol (LPG). It acts by transphosphatidylation, releasing exclusively cyclic phosphate products as second products. Induces dermonecrosis, hemolysis, increased vascular permeability, edema, inflammatory response, and platelet aggregation. The chain is Dermonecrotic toxin SpeSicTox-betaIB2b from Sicarius peruensis (Six-eyed sand spider).